The following is a 166-amino-acid chain: Large ribosomal subunit protein uL10 (166 aa).

It belongs to the universal ribosomal protein uL10 family. As to quaternary structure, part of the ribosomal stalk of the 50S ribosomal subunit. The N-terminus interacts with L11 and the large rRNA to form the base of the stalk. The C-terminus forms an elongated spine to which L12 dimers bind in a sequential fashion forming a multimeric L10(L12)X complex.

Forms part of the ribosomal stalk, playing a central role in the interaction of the ribosome with GTP-bound translation factors. This chain is Large ribosomal subunit protein uL10, found in Pseudomonas syringae pv. syringae (strain B728a).